We begin with the raw amino-acid sequence, 340 residues long: HTH-type transcriptional repressor PurR (340 aa).

The 55-residue stretch at 2–56 (ATIKDVAKLVGVSTTTVSHVINKTRFVAEDTTKAVWEAIASLNYSPSAVARSLKV) folds into the HTH lacI-type domain. The segment at residues 4-23 (IKDVAKLVGVSTTTVSHVIN) is a DNA-binding region (H-T-H motif). The DNA-binding element occupies 48-56 (SAVARSLKV). Residues tyrosine 73, lysine 188, threonine 190, phenylalanine 219, and aspartate 273 each contribute to the hypoxanthine site.

In terms of assembly, homodimer.

The protein operates within purine metabolism; purine nucleotide biosynthesis [regulation]. Its function is as follows. Is the main repressor of the genes involved in the de novo synthesis of purine nucleotides, regulating purB, purC, purEK, purF, purHD, purL, purMN and guaBA expression. PurR is allosterically activated to bind its cognate DNA by binding the purine corepressors, hypoxanthine or guanine, thereby effecting transcription repression. In Glaesserella parasuis serovar 5 (strain SH0165) (Haemophilus parasuis), this protein is HTH-type transcriptional repressor PurR.